Here is a 134-residue protein sequence, read N- to C-terminus: Ribonuclease P protein component 2 (134 aa).

Belongs to the eukaryotic/archaeal RNase P protein component 2 family. In terms of assembly, consists of a catalytic RNA component and at least 4-5 protein subunits. Forms a subcomplex with Rnp3 which stimulates the catalytic RNA.

Its subcellular location is the cytoplasm. It carries out the reaction Endonucleolytic cleavage of RNA, removing 5'-extranucleotides from tRNA precursor.. Its function is as follows. Part of ribonuclease P, a protein complex that generates mature tRNA molecules by cleaving their 5'-ends. In Methanocaldococcus jannaschii (strain ATCC 43067 / DSM 2661 / JAL-1 / JCM 10045 / NBRC 100440) (Methanococcus jannaschii), this protein is Ribonuclease P protein component 2.